A 481-amino-acid polypeptide reads, in one-letter code: 3-isopropylmalate dehydratase large subunit (481 aa).

[4Fe-4S] cluster is bound by residues C363, C423, and C426. A disordered region spans residues 434–465 (LRPGQRAASTSNRNFEGRQGRGGRTHLVSPPV).

The protein belongs to the aconitase/IPM isomerase family. LeuC type 1 subfamily. Heterodimer of LeuC and LeuD. [4Fe-4S] cluster serves as cofactor.

It carries out the reaction (2R,3S)-3-isopropylmalate = (2S)-2-isopropylmalate. The protein operates within amino-acid biosynthesis; L-leucine biosynthesis; L-leucine from 3-methyl-2-oxobutanoate: step 2/4. In terms of biological role, catalyzes the isomerization between 2-isopropylmalate and 3-isopropylmalate, via the formation of 2-isopropylmaleate. The chain is 3-isopropylmalate dehydratase large subunit from Salinispora tropica (strain ATCC BAA-916 / DSM 44818 / JCM 13857 / NBRC 105044 / CNB-440).